The sequence spans 352 residues: Adenosine deaminase (352 aa).

Residues histidine 24 and histidine 26 each coordinate Zn(2+). Substrate is bound by residues histidine 26, aspartate 28, and glycine 181. Histidine 208 contributes to the Zn(2+) binding site. Catalysis depends on glutamate 211, which acts as the Proton donor. Residue aspartate 290 coordinates Zn(2+).

This sequence belongs to the metallo-dependent hydrolases superfamily. Adenosine and AMP deaminases family. Adenosine deaminase subfamily. It depends on Zn(2+) as a cofactor.

It carries out the reaction adenosine + H2O + H(+) = inosine + NH4(+). It catalyses the reaction 2'-deoxyadenosine + H2O + H(+) = 2'-deoxyinosine + NH4(+). Its function is as follows. Catalyzes the hydrolytic deamination of adenosine and 2-deoxyadenosine. In Lactococcus lactis subsp. lactis (strain IL1403) (Streptococcus lactis), this protein is Adenosine deaminase.